The chain runs to 448 residues: Signal recognition particle 54 kDa protein (448 aa).

GTP contacts are provided by residues 107–114, 189–193, and 247–250; these read GIQGSGKT, DSAGR, and TKLD.

It belongs to the GTP-binding SRP family. SRP54 subfamily. As to quaternary structure, part of the signal recognition particle protein translocation system, which is composed of SRP and FtsY. Archaeal SRP consists of a 7S RNA molecule of 300 nucleotides and two protein subunits: SRP54 and SRP19.

Its subcellular location is the cytoplasm. The enzyme catalyses GTP + H2O = GDP + phosphate + H(+). Functionally, involved in targeting and insertion of nascent membrane proteins into the cytoplasmic membrane. Binds to the hydrophobic signal sequence of the ribosome-nascent chain (RNC) as it emerges from the ribosomes. The SRP-RNC complex is then targeted to the cytoplasmic membrane where it interacts with the SRP receptor FtsY. This Thermococcus kodakarensis (strain ATCC BAA-918 / JCM 12380 / KOD1) (Pyrococcus kodakaraensis (strain KOD1)) protein is Signal recognition particle 54 kDa protein.